Reading from the N-terminus, the 143-residue chain is Putative pre-16S rRNA nuclease (143 aa).

Belongs to the YqgF nuclease family.

The protein resides in the cytoplasm. Its function is as follows. Could be a nuclease involved in processing of the 5'-end of pre-16S rRNA. The protein is Putative pre-16S rRNA nuclease of Crocosphaera subtropica (strain ATCC 51142 / BH68) (Cyanothece sp. (strain ATCC 51142)).